The following is a 221-amino-acid chain: Urease accessory protein UreG (221 aa).

19–26 (GPVGSGKT) lines the GTP pocket.

The protein belongs to the SIMIBI class G3E GTPase family. UreG subfamily. In terms of assembly, homodimer. UreD, UreF and UreG form a complex that acts as a GTP-hydrolysis-dependent molecular chaperone, activating the urease apoprotein by helping to assemble the nickel containing metallocenter of UreC. The UreE protein probably delivers the nickel.

It localises to the cytoplasm. In terms of biological role, facilitates the functional incorporation of the urease nickel metallocenter. This process requires GTP hydrolysis, probably effectuated by UreG. The sequence is that of Urease accessory protein UreG from Yersinia enterocolitica serotype O:8 / biotype 1B (strain NCTC 13174 / 8081).